Here is a 252-residue protein sequence, read N- to C-terminus: Uracil-DNA glycosylase (252 aa).

Residue aspartate 78 is the Proton acceptor of the active site.

The protein belongs to the uracil-DNA glycosylase (UDG) superfamily. UNG family.

It localises to the cytoplasm. The enzyme catalyses Hydrolyzes single-stranded DNA or mismatched double-stranded DNA and polynucleotides, releasing free uracil.. In terms of biological role, excises uracil residues from the DNA which can arise as a result of misincorporation of dUMP residues by DNA polymerase or due to deamination of cytosine. This chain is Uracil-DNA glycosylase, found in Bordetella avium (strain 197N).